A 100-amino-acid polypeptide reads, in one-letter code: Aspartyl/glutamyl-tRNA(Asn/Gln) amidotransferase subunit C (100 aa).

The protein belongs to the GatC family. Heterotrimer of A, B and C subunits.

The catalysed reaction is L-glutamyl-tRNA(Gln) + L-glutamine + ATP + H2O = L-glutaminyl-tRNA(Gln) + L-glutamate + ADP + phosphate + H(+). It catalyses the reaction L-aspartyl-tRNA(Asn) + L-glutamine + ATP + H2O = L-asparaginyl-tRNA(Asn) + L-glutamate + ADP + phosphate + 2 H(+). Allows the formation of correctly charged Asn-tRNA(Asn) or Gln-tRNA(Gln) through the transamidation of misacylated Asp-tRNA(Asn) or Glu-tRNA(Gln) in organisms which lack either or both of asparaginyl-tRNA or glutaminyl-tRNA synthetases. The reaction takes place in the presence of glutamine and ATP through an activated phospho-Asp-tRNA(Asn) or phospho-Glu-tRNA(Gln). This Herminiimonas arsenicoxydans protein is Aspartyl/glutamyl-tRNA(Asn/Gln) amidotransferase subunit C.